Here is a 165-residue protein sequence, read N- to C-terminus: uncharacterized protein (165 aa).

This is an uncharacterized protein from Saccharomyces cerevisiae (strain ATCC 204508 / S288c) (Baker's yeast).